Reading from the N-terminus, the 345-residue chain is Phosphoribosylformylglycinamidine cyclo-ligase (345 aa).

Belongs to the AIR synthase family.

It is found in the cytoplasm. The enzyme catalyses 2-formamido-N(1)-(5-O-phospho-beta-D-ribosyl)acetamidine + ATP = 5-amino-1-(5-phospho-beta-D-ribosyl)imidazole + ADP + phosphate + H(+). It functions in the pathway purine metabolism; IMP biosynthesis via de novo pathway; 5-amino-1-(5-phospho-D-ribosyl)imidazole from N(2)-formyl-N(1)-(5-phospho-D-ribosyl)glycinamide: step 2/2. This Limosilactobacillus fermentum (strain NBRC 3956 / LMG 18251) (Lactobacillus fermentum) protein is Phosphoribosylformylglycinamidine cyclo-ligase.